The chain runs to 154 residues: 6,7-dimethyl-8-ribityllumazine synthase (154 aa).

Residues F26, 60–62 (ALE), and 84–86 (CII) contribute to the 5-amino-6-(D-ribitylamino)uracil site. Residue 89–90 (ET) participates in (2S)-2-hydroxy-3-oxobutyl phosphate binding. The active-site Proton donor is H92. N117 is a binding site for 5-amino-6-(D-ribitylamino)uracil. R131 is a binding site for (2S)-2-hydroxy-3-oxobutyl phosphate.

It belongs to the DMRL synthase family.

It carries out the reaction (2S)-2-hydroxy-3-oxobutyl phosphate + 5-amino-6-(D-ribitylamino)uracil = 6,7-dimethyl-8-(1-D-ribityl)lumazine + phosphate + 2 H2O + H(+). Its pathway is cofactor biosynthesis; riboflavin biosynthesis; riboflavin from 2-hydroxy-3-oxobutyl phosphate and 5-amino-6-(D-ribitylamino)uracil: step 1/2. Catalyzes the formation of 6,7-dimethyl-8-ribityllumazine by condensation of 5-amino-6-(D-ribitylamino)uracil with 3,4-dihydroxy-2-butanone 4-phosphate. This is the penultimate step in the biosynthesis of riboflavin. This is 6,7-dimethyl-8-ribityllumazine synthase from Polaromonas sp. (strain JS666 / ATCC BAA-500).